The primary structure comprises 310 residues: MEDIIYITGHKNPDTDSICSAIAYSELKNKLGFNTVPGRLGNISRETEFALNYFKANAPKLLENLSSNQDIIIVDHNERAQSVDNLEDLHLLEIIDHHRIADIQTSYPIFFRNEPVGCSSTIIGSMYFEKGIEPSKRAAGLMCSAIISDTLLFRSPTTTARDKEVLKKLAKIADIDPEKYASEMFKAGTSLKGKTVEEIFNSDYKAFNLGDKKIGVSQVTTMDIEGFDEYKKDMLAYMNKKVKDENFNAVLLLLTDIIKEGSLIIATGENTDLVNKAFNVELKDNAVYVPGILSRKKQVIPPLTSAIEGK.

6 residues coordinate Mn(2+): His-10, Asp-14, Asp-16, Asp-75, His-97, and Asp-149.

It belongs to the PPase class C family. Mn(2+) is required as a cofactor.

The protein localises to the cytoplasm. It catalyses the reaction diphosphate + H2O = 2 phosphate + H(+). This Clostridium acetobutylicum (strain ATCC 824 / DSM 792 / JCM 1419 / IAM 19013 / LMG 5710 / NBRC 13948 / NRRL B-527 / VKM B-1787 / 2291 / W) protein is Probable manganese-dependent inorganic pyrophosphatase.